The sequence spans 341 residues: Methionine import ATP-binding protein MetN 1 (341 aa).

Residues 2–241 (IEFRQVSKSF…PKTTIAQNFV (240 aa)) enclose the ABC transporter domain. 38-45 (GYSGAGKS) serves as a coordination point for ATP.

Belongs to the ABC transporter superfamily. Methionine importer (TC 3.A.1.24) family. The complex is composed of two ATP-binding proteins (MetN), two transmembrane proteins (MetI) and a solute-binding protein (MetQ).

Its subcellular location is the cell membrane. The catalysed reaction is L-methionine(out) + ATP + H2O = L-methionine(in) + ADP + phosphate + H(+). It catalyses the reaction D-methionine(out) + ATP + H2O = D-methionine(in) + ADP + phosphate + H(+). In terms of biological role, part of the ABC transporter complex MetNIQ involved in methionine import. Responsible for energy coupling to the transport system. This chain is Methionine import ATP-binding protein MetN 1, found in Staphylococcus aureus (strain bovine RF122 / ET3-1).